We begin with the raw amino-acid sequence, 252 residues long: Probable endonuclease 4 (252 aa).

Zn(2+) is bound by residues histidine 56, histidine 96, glutamate 129, aspartate 162, histidine 165, histidine 191, aspartate 204, histidine 206, and glutamate 233.

This sequence belongs to the AP endonuclease 2 family. Zn(2+) serves as cofactor.

The enzyme catalyses Endonucleolytic cleavage to 5'-phosphooligonucleotide end-products.. In terms of biological role, endonuclease IV plays a role in DNA repair. It cleaves phosphodiester bonds at apurinic or apyrimidinic (AP) sites, generating a 3'-hydroxyl group and a 5'-terminal sugar phosphate. The chain is Probable endonuclease 4 from Mycobacterium ulcerans (strain Agy99).